A 144-amino-acid chain; its full sequence is 3-hydroxyacyl-[acyl-carrier-protein] dehydratase FabZ (144 aa).

Histidine 51 is an active-site residue.

The protein belongs to the thioester dehydratase family. FabZ subfamily.

It is found in the cytoplasm. It carries out the reaction a (3R)-hydroxyacyl-[ACP] = a (2E)-enoyl-[ACP] + H2O. Functionally, involved in unsaturated fatty acids biosynthesis. Catalyzes the dehydration of short chain beta-hydroxyacyl-ACPs and long chain saturated and unsaturated beta-hydroxyacyl-ACPs. The sequence is that of 3-hydroxyacyl-[acyl-carrier-protein] dehydratase FabZ from Clostridium botulinum (strain ATCC 19397 / Type A).